Consider the following 960-residue polypeptide: Endosome/lysosome-associated apoptosis and autophagy regulator family member 2 (960 aa).

Residues 1 to 26 are disordered; it reads MLFLRPGPARGRGRGRPARAPHSGLS. The signal sequence occupies residues 1 to 44; sequence MLFLRPGPARGRGRGRPARAPHSGLSPPWSPAWICCWALAGCQA. Residues 45–860 are Extracellular-facing; that stretch reads AWAGAGDLPS…TCETVDFWLK (816 aa). An N-linked (GlcNAc...) asparagine glycan is attached at Asn171. 3 disulfide bridges follow: Cys295/Cys312, Cys325/Cys348, and Cys328/Cys360. N-linked (GlcNAc...) asparagine glycans are attached at residues Asn407 and Asn622. The MRH domain maps to 597 to 808; that stretch reads PTCPYIRSMA…LWESVEACPL (212 aa). 4 disulfides stabilise this stretch: Cys599/Cys651, Cys661/Cys689, Cys758/Cys794, and Cys770/Cys806. Residues 861–881 traverse the membrane as a helical segment; that stretch reads VGAGVGAFTAVLLVALTCYFW. The Cytoplasmic segment spans residues 882 to 960; that stretch reads KKNQKLEYKY…QLKSSRSPNI (79 aa). The residue at position 949 (Ser949) is a Phosphoserine.

Belongs to the ELAPOR family.

The protein resides in the cell membrane. Functionally, functions as a regulator of the BMP signaling pathway and may be involved in epidermal differentiation. The polypeptide is Endosome/lysosome-associated apoptosis and autophagy regulator family member 2 (Bos taurus (Bovine)).